A 131-amino-acid polypeptide reads, in one-letter code: Peptide methionine sulfoxide reductase MsrB (131 aa).

The MsrB domain maps to Leu8–Arg130. Positions 47, 50, 96, and 99 each coordinate Zn(2+). The active-site Nucleophile is Cys119.

It belongs to the MsrB Met sulfoxide reductase family. Zn(2+) serves as cofactor.

The enzyme catalyses L-methionyl-[protein] + [thioredoxin]-disulfide + H2O = L-methionyl-(R)-S-oxide-[protein] + [thioredoxin]-dithiol. This Pseudomonas savastanoi pv. phaseolicola (strain 1448A / Race 6) (Pseudomonas syringae pv. phaseolicola (strain 1448A / Race 6)) protein is Peptide methionine sulfoxide reductase MsrB.